Consider the following 475-residue polypeptide: Flavin-dependent monooxygenase (475 aa).

The protein belongs to the aromatic-ring hydroxylase family. Requires FAD as cofactor.

It is found in the cytoplasm. It carries out the reaction a tetracycline + NADPH + O2 + H(+) = an 11a-hydroxytetracycline + NADP(+) + H2O. The catalysed reaction is tetracycline + NADPH + O2 + H(+) = 11a-hydroxytetracycline + NADP(+) + H2O. Inhibited by anhydrotetracycline. Functionally, an FAD-requiring monooxygenase active on some tetracycline antibiotic derivatives, which leads to their inactivation. Hydroxylates carbon 11a of tetracycline and some analogs. Confers resistance to tetracycline and doxycycline via an oxidoreductase activity; probably monooxygenates the antibiotics. Does not act on tigecycline. The chain is Flavin-dependent monooxygenase from Mycobacteroides abscessus (strain ATCC 19977 / DSM 44196 / CCUG 20993 / CIP 104536 / JCM 13569 / NCTC 13031 / TMC 1543 / L948) (Mycobacterium abscessus).